The following is a 447-amino-acid chain: Phosphoglucosamine mutase (447 aa).

Residue serine 104 is the Phosphoserine intermediate of the active site. Mg(2+) contacts are provided by serine 104, aspartate 243, aspartate 245, and aspartate 247. Serine 104 carries the post-translational modification Phosphoserine.

Belongs to the phosphohexose mutase family. Requires Mg(2+) as cofactor. Activated by phosphorylation.

The catalysed reaction is alpha-D-glucosamine 1-phosphate = D-glucosamine 6-phosphate. Catalyzes the conversion of glucosamine-6-phosphate to glucosamine-1-phosphate. The chain is Phosphoglucosamine mutase from Corynebacterium efficiens (strain DSM 44549 / YS-314 / AJ 12310 / JCM 11189 / NBRC 100395).